A 217-amino-acid chain; its full sequence is MPETEKPLFGHPWIFIRGVPSLNFLPPEGPPEVAFAGRSNVGKSSLINALVSQKGLARTSNTPGRTQELNYFVPDGYSGEAGDLPPMAIVDMPGYGYAQAPKEQVDKWTKLVFDYLRGRATLKRVYVLIDSRHGIKKNDDDVLDLLDKAAVSYQLVLTKTDKIKAPAVPKLLAETADKIRKRPAAYPYLLSTSSEKGDGLDELRQAIAETVGIANWK.

The EngB-type G domain occupies 29 to 213 (GPPEVAFAGR…RQAIAETVGI (185 aa)). GTP-binding positions include 37–44 (GRSNVGKS), 64–68 (GRTQE), 91–94 (DMPG), 158–161 (TKTD), and 192–194 (TSS). Residues Ser44 and Thr66 each contribute to the Mg(2+) site.

This sequence belongs to the TRAFAC class TrmE-Era-EngA-EngB-Septin-like GTPase superfamily. EngB GTPase family. It depends on Mg(2+) as a cofactor.

In terms of biological role, necessary for normal cell division and for the maintenance of normal septation. This is Probable GTP-binding protein EngB from Rhizobium etli (strain ATCC 51251 / DSM 11541 / JCM 21823 / NBRC 15573 / CFN 42).